A 117-amino-acid chain; its full sequence is Ribonuclease P protein component 4 (117 aa).

Positions 64, 67, 93, and 96 each coordinate Zn(2+).

This sequence belongs to the eukaryotic/archaeal RNase P protein component 4 family. In terms of assembly, consists of a catalytic RNA component and at least 4-5 protein subunits. Zn(2+) serves as cofactor.

It localises to the cytoplasm. It carries out the reaction Endonucleolytic cleavage of RNA, removing 5'-extranucleotides from tRNA precursor.. In terms of biological role, part of ribonuclease P, a protein complex that generates mature tRNA molecules by cleaving their 5'-ends. This is Ribonuclease P protein component 4 from Pyrococcus abyssi (strain GE5 / Orsay).